The chain runs to 764 residues: FAST kinase domain-containing protein 5, mitochondrial (764 aa).

S95 is subject to Phosphoserine. K507 carries the N6-acetyllysine modification. The RAP domain maps to 697–757 (LAIQFTNRNQ…RLEKLAFLHE (61 aa)).

The protein belongs to the FAST kinase family. In terms of assembly, found in a complex with GRSF1, DDX28, DHX30 and FASTKD2. Associates with the 12S mitochondrial rRNA (12S mt-rRNA).

It is found in the mitochondrion matrix. Its subcellular location is the mitochondrion nucleoid. Functionally, plays an important role in the processing of non-canonical mitochondrial mRNA precursors. The polypeptide is FAST kinase domain-containing protein 5, mitochondrial (FASTKD5) (Macaca fascicularis (Crab-eating macaque)).